A 233-amino-acid chain; its full sequence is Ribonuclease HII (233 aa).

Residues 21–211 form the RNase H type-2 domain; it reads KIIAGVDEVG…LDALPQWRHL (191 aa). A divalent metal cation is bound by residues Asp-27, Glu-28, and Asp-119.

The protein belongs to the RNase HII family. Mn(2+) serves as cofactor. Requires Mg(2+) as cofactor.

The protein resides in the cytoplasm. It catalyses the reaction Endonucleolytic cleavage to 5'-phosphomonoester.. In terms of biological role, endonuclease that specifically degrades the RNA of RNA-DNA hybrids. The protein is Ribonuclease HII (rnhB) of Streptomyces coelicolor (strain ATCC BAA-471 / A3(2) / M145).